Here is a 788-residue protein sequence, read N- to C-terminus: Ribonucleoside-diphosphate reductase large subunit (788 aa).

The 92-residue stretch at 7-98 folds into the ATP-cone domain; sequence TYVVKRDGRK…VSNLHKKTNK (92 aa). Residues 11 to 12, 17 to 23, Thr-59, and Asp-63 each bind ATP; these read KR and EDVHFDK. Residues Ser-208 and Ser-223 each contribute to the GDP site. Cys-224 and Cys-450 are joined by a disulfide. Residues 232–234, Lys-249, Arg-262, and 269–270 each bind dTTP; these read DSI and AG. Position 433 (Asn-433) interacts with GDP. Asn-433 (proton acceptor) is an active-site residue. Cys-435 (cysteine radical intermediate) is an active-site residue. Residues Glu-437 and 610–613 contribute to the GDP site; that span reads TAST. Glu-437 serves as the catalytic Proton acceptor.

This sequence belongs to the ribonucleoside diphosphate reductase large chain family. Heterodimer of a large and a small subunit.

It catalyses the reaction a 2'-deoxyribonucleoside 5'-diphosphate + [thioredoxin]-disulfide + H2O = a ribonucleoside 5'-diphosphate + [thioredoxin]-dithiol. Under complex allosteric control mediated by deoxynucleoside triphosphates and ATP binding to separate specificity and activation sites on the large subunit. The type of nucleotide bound at the specificity site determines substrate preference. It seems probable that ATP makes the enzyme reduce CDP and UDP, dGTP favors ADP reduction and dTTP favors GDP reduction. Stimulated by ATP and inhibited by dATP binding to the activity site. Functionally, provides the precursors necessary for DNA synthesis. Catalyzes the biosynthesis of deoxyribonucleotides from the corresponding ribonucleotides. The sequence is that of Ribonucleoside-diphosphate reductase large subunit (rnr-1) from Caenorhabditis elegans.